A 760-amino-acid polypeptide reads, in one-letter code: 5-methyltetrahydropteroyltriglutamate--homocysteine methyltransferase (760 aa).

5-methyltetrahydropteroyltri-L-glutamate is bound by residues 17–20 (RELK) and K118. L-homocysteine contacts are provided by residues 434–436 (IGS) and E487. L-methionine is bound by residues 434 to 436 (IGS) and E487. Residues 518-519 (RC) and W564 contribute to the 5-methyltetrahydropteroyltri-L-glutamate site. Residue D602 coordinates L-homocysteine. D602 contributes to the L-methionine binding site. E608 contributes to the 5-methyltetrahydropteroyltri-L-glutamate binding site. Residues H644, C646, and E668 each coordinate Zn(2+). Catalysis depends on H697, which acts as the Proton donor. Position 729 (C729) interacts with Zn(2+).

Belongs to the vitamin-B12 independent methionine synthase family. The cofactor is Zn(2+).

The catalysed reaction is 5-methyltetrahydropteroyltri-L-glutamate + L-homocysteine = tetrahydropteroyltri-L-glutamate + L-methionine. It functions in the pathway amino-acid biosynthesis; L-methionine biosynthesis via de novo pathway; L-methionine from L-homocysteine (MetE route): step 1/1. Its function is as follows. Catalyzes the transfer of a methyl group from 5-methyltetrahydrofolate to homocysteine resulting in methionine formation. The protein is 5-methyltetrahydropteroyltriglutamate--homocysteine methyltransferase of Buchnera aphidicola subsp. Cinara cedri (strain Cc).